A 189-amino-acid polypeptide reads, in one-letter code: uncharacterized protein (189 aa).

The 61-residue stretch at 9-69 folds into the HTH tetR-type domain; sequence ADTGGRILRA…SMLTSHIAAV (61 aa). Positions 32–51 form a DNA-binding region, H-T-H motif; sequence TLAEIARRAGVSRPTVYRRW.

This is an uncharacterized protein from Mycobacterium bovis (strain ATCC BAA-935 / AF2122/97).